The chain runs to 179 residues: RNA pyrophosphohydrolase (179 aa).

Positions 6–149 constitute a Nudix hydrolase domain; it reads GYRANVGIVI…KKPIYEDMLK (144 aa). A Nudix box motif is present at residues 38–59; sequence GGIDFGESELDALFRELNEEIG.

This sequence belongs to the Nudix hydrolase family. RppH subfamily. A divalent metal cation serves as cofactor.

Its function is as follows. Accelerates the degradation of transcripts by removing pyrophosphate from the 5'-end of triphosphorylated RNA, leading to a more labile monophosphorylated state that can stimulate subsequent ribonuclease cleavage. The sequence is that of RNA pyrophosphohydrolase from Ruthia magnifica subsp. Calyptogena magnifica.